The sequence spans 102 residues: Nucleoid-associated protein WIGBR5260 (102 aa).

It belongs to the YbaB/EbfC family. As to quaternary structure, homodimer.

The protein localises to the cytoplasm. Its subcellular location is the nucleoid. Its function is as follows. Binds to DNA and alters its conformation. May be involved in regulation of gene expression, nucleoid organization and DNA protection. The polypeptide is Nucleoid-associated protein WIGBR5260 (Wigglesworthia glossinidia brevipalpis).